The primary structure comprises 711 residues: L-type lectin-domain containing receptor kinase VIII.2 (711 aa).

Residues 1–30 (MLKLPPRFFSVYSTLIHILASFLCSSDVRG) form the signal peptide. Topologically, residues 31–315 (DFPATRFDLG…NKLCKKSPAA (285 aa)) are extracellular. The interval 35–260 (TRFDLGTLTL…IHSVDWWSFS (226 aa)) is legume-lectin like. Asn57 carries an N-linked (GlcNAc...) asparagine glycan. Residues 265-306 (ESSESPPPMPNSPPPSSPSSSITPSLSTVRRKTADPSSSCRN) form a disordered region. The span at 269 to 281 (SPPPMPNSPPPSS) shows a compositional bias: pro residues. Over residues 282–291 (PSSSITPSLS) the composition is skewed to low complexity. Residues 316–336 (VAGVVTAGAFFLALFAGVIIW) traverse the membrane as a helical segment. Topologically, residues 337–711 (VYSKKIKYTR…IFIVGKDRSV (375 aa)) are cytoplasmic. Residues 374–656 (FSSSRVIGNG…LVGEADVPEV (283 aa)) form the Protein kinase domain. Residues 380–388 (IGNGAFGTV) and Lys403 each bind ATP. Asp497 acts as the Proton acceptor in catalysis.

In the C-terminal section; belongs to the protein kinase superfamily. Ser/Thr protein kinase family. It in the N-terminal section; belongs to the leguminous lectin family.

The protein localises to the cell membrane. The enzyme catalyses L-seryl-[protein] + ATP = O-phospho-L-seryl-[protein] + ADP + H(+). The catalysed reaction is L-threonyl-[protein] + ATP = O-phospho-L-threonyl-[protein] + ADP + H(+). Its function is as follows. Involved in resistance response to the pathogenic oomycetes Phytophthora infestans and Phytophthora capsici. The chain is L-type lectin-domain containing receptor kinase VIII.2 from Arabidopsis thaliana (Mouse-ear cress).